Here is a 139-residue protein sequence, read N- to C-terminus: Lymphocyte antigen 6H (139 aa).

A signal peptide spans 1 to 25 (MLPAAMKSLGLALLALLLCPSPAHG). The region spanning 26-113 (LWCQDCTLAN…CEKDLCNGAS (88 aa)) is the UPAR/Ly6 domain. Cystine bridges form between Cys-28-Cys-51, Cys-31-Cys-39, Cys-44-Cys-72, Cys-76-Cys-103, and Cys-104-Cys-109. A glycan (N-linked (GlcNAc...) asparagine) is linked at Asn-35. Asn-110 carries the GPI-anchor amidated asparagine lipid modification. The propeptide at 111 to 139 (GASVAGRSPWALAGGLLLSLGPALLWAGP) is removed in mature form.

In terms of assembly, interacts with CHRNA4 and CHRNA7. As to expression, strongly expressed in brain, also found in lower levels in eye and reproductive tissues.

It localises to the cell membrane. Its function is as follows. Believed to act as modulator of nicotinic acetylcholine receptors (nAChRs) activity. In vitro inhibits alpha-3:beta-4-containing nAChRs maximum response. In vitro inhibits alpha-3:beta-4-containing nAChRs maximum response. May play a role in the intracellular trafficking of alpha-7-containing nAChRs and may inhibit their expression at the cell surface. Seems to inhibit alpha-7/CHRNA7 signaling in hippocampal neurons. The protein is Lymphocyte antigen 6H (Ly6h) of Mus musculus (Mouse).